A 278-amino-acid polypeptide reads, in one-letter code: NAD-capped RNA hydrolase NudC (278 aa).

Arg-84 provides a ligand contact to substrate. Zn(2+)-binding residues include Cys-114 and Cys-117. Position 127 (Glu-127) interacts with substrate. 2 residues coordinate Zn(2+): Cys-132 and Cys-135. Tyr-140 serves as a coordination point for substrate. The Nudix hydrolase domain maps to 141–265 (PRLSPSMIVL…IARHLIDLYL (125 aa)). Positions 174, 190, and 194 each coordinate a divalent metal cation. Residues 175–196 (GFVEAGESVEQCVVREVREEVG) carry the Nudix box motif. Residue 208–215 (QNWPFPHS) coordinates substrate. Glu-235 is a binding site for a divalent metal cation. Ala-257 lines the substrate pocket.

This sequence belongs to the Nudix hydrolase family. NudC subfamily. In terms of assembly, homodimer. Requires Mg(2+) as cofactor. It depends on Mn(2+) as a cofactor. Zn(2+) is required as a cofactor.

The catalysed reaction is a 5'-end NAD(+)-phospho-ribonucleoside in mRNA + H2O = a 5'-end phospho-adenosine-phospho-ribonucleoside in mRNA + beta-nicotinamide D-ribonucleotide + 2 H(+). The enzyme catalyses NAD(+) + H2O = beta-nicotinamide D-ribonucleotide + AMP + 2 H(+). It carries out the reaction NADH + H2O = reduced beta-nicotinamide D-ribonucleotide + AMP + 2 H(+). In terms of biological role, mRNA decapping enzyme that specifically removes the nicotinamide adenine dinucleotide (NAD) cap from a subset of mRNAs by hydrolyzing the diphosphate linkage to produce nicotinamide mononucleotide (NMN) and 5' monophosphate mRNA. The NAD-cap is present at the 5'-end of some mRNAs and stabilizes RNA against 5'-processing. Has preference for mRNAs with a 5'-end purine. Catalyzes the hydrolysis of a broad range of dinucleotide pyrophosphates. The sequence is that of NAD-capped RNA hydrolase NudC from Pseudomonas aeruginosa (strain ATCC 15692 / DSM 22644 / CIP 104116 / JCM 14847 / LMG 12228 / 1C / PRS 101 / PAO1).